A 2210-amino-acid polypeptide reads, in one-letter code: Mediator of RNA polymerase II transcription subunit 13-like (2210 aa).

Polar residues predominate over residues 391 to 400 (SKRSQMSTPT). Disordered regions lie at residues 391-414 (SKRSQMSTPTLEEEPASNPATWDF), 435-489 (AVGP…PFHH), and 519-582 (VSSS…NPAL). Low complexity predominate over residues 445-458 (SQPGFSAGPSSSSS). Residues 468-480 (KTAERQEKGDKLQ) show a composition bias toward basic and acidic residues. Positions 533–544 (SRNTSKQMNLNP) are enriched in polar residues. The span at 551–560 (PISPLPPTLS) shows a compositional bias: pro residues. S553 and S560 each carry phosphoserine. The short motif at 669-673 (LQRLL) is the LXXLL motif 1 element. Residues 736–752 (GTEKDSLKKNKSEDGFG) show a composition bias toward basic and acidic residues. Residues 736–770 (GTEKDSLKKNKSEDGFGTKDVTTPGHSTPVPDGKN) are disordered. A phosphoserine mark is found at S817, S826, and S923. Residues 1016-1096 (PQMNTPVTLN…STTRPLNSVE (81 aa)) are disordered. A compositionally biased stretch (low complexity) spans 1025–1036 (NSAAPASNSGAG). The segment covering 1077–1092 (TDQGSPASTPSTTRPL) has biased composition (polar residues). Residues 1225–1229 (LLLLL) carry the LXXLL motif 2 motif. Positions 1380 to 1401 (LPIPTLLVGYDKDFLTISPFSL) are leucine-zipper. Disordered regions lie at residues 1530-1656 (QTPP…VTER) and 2045-2080 (GNLHSSPNSSPVPSPGSPSGIGVGSHFQHSRSQGER). Over residues 1531 to 1608 (TPPAAAQGQA…ISTTSSSGFS (78 aa)) the composition is skewed to low complexity. Polar residues predominate over residues 1615–1629 (NPSTGGISADRTQGN). Over residues 1637 to 1650 (DPGQSSSQPSQDGQ) the composition is skewed to low complexity. S2083 carries the post-translational modification Phosphoserine.

Belongs to the Mediator complex subunit 13 family. Component of the Mediator complex, which is composed of MED1, MED4, MED6, MED7, MED8, MED9, MED10, MED11, MED12, MED13, MED13L, MED14, MED15, MED16, MED17, MED18, MED19, MED20, MED21, MED22, MED23, MED24, MED25, MED26, MED27, MED29, MED30, MED31, CCNC, CDK8 and CDC2L6/CDK11. The MED12, MED13, CCNC and CDK8 subunits form a distinct module termed the CDK8 module. Mediator containing the CDK8 module is less active than Mediator lacking this module in supporting transcriptional activation. Individual preparations of the Mediator complex lacking one or more distinct subunits have been variously termed ARC, CRSP, DRIP, PC2, SMCC and TRAP. As to expression, highly expressed in brain (cerebellum), heart (aorta), skeletal muscle, kidney, placenta and peripheral blood leukocytes. Highly expressed in fetal brain.

Its subcellular location is the nucleus. Component of the Mediator complex, a coactivator involved in the regulated transcription of nearly all RNA polymerase II-dependent genes. Mediator functions as a bridge to convey information from gene-specific regulatory proteins to the basal RNA polymerase II transcription machinery. Mediator is recruited to promoters by direct interactions with regulatory proteins and serves as a scaffold for the assembly of a functional preinitiation complex with RNA polymerase II and the general transcription factors. This subunit may specifically regulate transcription of targets of the Wnt signaling pathway and SHH signaling pathway. This Homo sapiens (Human) protein is Mediator of RNA polymerase II transcription subunit 13-like (MED13L).